The following is an 807-amino-acid chain: Protein FAR1-RELATED SEQUENCE 2 (807 aa).

An FAR1 domain is found at 52–138 (YFYREYARSV…VKEHNHEICP (87 aa)). The MULE domain maps to 219-315 (VVLFDTFYVR…CLWSVLSKIS (97 aa)). The SWIM-type zinc-finger motif lies at 499 to 535 (FFVALNNELLDACCSCHLFEYQGFLCKHAILVLQSAD). The stretch at 660–680 (EDATNRSEELRQETEQVSSRA) forms a coiled coil. The segment covering 788–798 (GSSQFQGSDSS) has biased composition (polar residues). Positions 788–807 (GSSQFQGSDSSHPSDHRLSN) are disordered.

Belongs to the FHY3/FAR1 family. In terms of tissue distribution, expressed in hypocotyls, rosette and cauline leaves, inflorescences stems, flowers and siliques.

It is found in the nucleus. Functionally, putative transcription activator involved in regulating light control of development. The chain is Protein FAR1-RELATED SEQUENCE 2 (FRS2) from Arabidopsis thaliana (Mouse-ear cress).